Consider the following 75-residue polypeptide: UPF0352 protein ESA_01049 (75 aa).

The protein belongs to the UPF0352 family.

This Cronobacter sakazakii (strain ATCC BAA-894) (Enterobacter sakazakii) protein is UPF0352 protein ESA_01049.